We begin with the raw amino-acid sequence, 467 residues long: 3-isopropylmalate dehydratase large subunit (467 aa).

Residues cysteine 347, cysteine 407, and cysteine 410 each contribute to the [4Fe-4S] cluster site.

Belongs to the aconitase/IPM isomerase family. LeuC type 1 subfamily. Heterodimer of LeuC and LeuD. The cofactor is [4Fe-4S] cluster.

The catalysed reaction is (2R,3S)-3-isopropylmalate = (2S)-2-isopropylmalate. Its pathway is amino-acid biosynthesis; L-leucine biosynthesis; L-leucine from 3-methyl-2-oxobutanoate: step 2/4. In terms of biological role, catalyzes the isomerization between 2-isopropylmalate and 3-isopropylmalate, via the formation of 2-isopropylmaleate. The protein is 3-isopropylmalate dehydratase large subunit of Prochlorococcus marinus (strain MIT 9301).